The sequence spans 180 residues: ATP synthase subunit delta (180 aa).

This sequence belongs to the ATPase delta chain family. In terms of assembly, F-type ATPases have 2 components, F(1) - the catalytic core - and F(0) - the membrane proton channel. F(1) has five subunits: alpha(3), beta(3), gamma(1), delta(1), epsilon(1). F(0) has three main subunits: a(1), b(2) and c(10-14). The alpha and beta chains form an alternating ring which encloses part of the gamma chain. F(1) is attached to F(0) by a central stalk formed by the gamma and epsilon chains, while a peripheral stalk is formed by the delta and b chains.

It localises to the cell inner membrane. Functionally, f(1)F(0) ATP synthase produces ATP from ADP in the presence of a proton or sodium gradient. F-type ATPases consist of two structural domains, F(1) containing the extramembraneous catalytic core and F(0) containing the membrane proton channel, linked together by a central stalk and a peripheral stalk. During catalysis, ATP synthesis in the catalytic domain of F(1) is coupled via a rotary mechanism of the central stalk subunits to proton translocation. This protein is part of the stalk that links CF(0) to CF(1). It either transmits conformational changes from CF(0) to CF(1) or is implicated in proton conduction. This Paracidovorax citrulli (strain AAC00-1) (Acidovorax citrulli) protein is ATP synthase subunit delta.